Consider the following 152-residue polypeptide: Transcriptional repressor NrdR (152 aa).

The segment at 3 to 34 (CCYCGHGESKVLETRSAEEGRVIRRRRECMEC) is a zinc-finger region. The ATP-cone domain occupies 49-139 (LIVRKKGGSL…VYRQFTDVGR (91 aa)).

The protein belongs to the NrdR family. It depends on Zn(2+) as a cofactor.

Its function is as follows. Negatively regulates transcription of bacterial ribonucleotide reductase nrd genes and operons by binding to NrdR-boxes. This Heliobacterium modesticaldum (strain ATCC 51547 / Ice1) protein is Transcriptional repressor NrdR.